The following is a 238-amino-acid chain: Ribonuclease PH (238 aa).

Phosphate is bound by residues Arg-86 and 124-126 (GTR).

The protein belongs to the RNase PH family. In terms of assembly, homohexameric ring arranged as a trimer of dimers.

The enzyme catalyses tRNA(n+1) + phosphate = tRNA(n) + a ribonucleoside 5'-diphosphate. Phosphorolytic 3'-5' exoribonuclease that plays an important role in tRNA 3'-end maturation. Removes nucleotide residues following the 3'-CCA terminus of tRNAs; can also add nucleotides to the ends of RNA molecules by using nucleoside diphosphates as substrates, but this may not be physiologically important. Probably plays a role in initiation of 16S rRNA degradation (leading to ribosome degradation) during starvation. The protein is Ribonuclease PH of Haemophilus influenzae (strain 86-028NP).